We begin with the raw amino-acid sequence, 784 residues long: Toll-like receptor 2 (784 aa).

An N-terminal signal peptide occupies residues 1-24 (MLRALWLFWILVAITVLFSKRCSA). Residues 25-587 (QESLSCDASG…ARPSVLECHQ (563 aa)) are Extracellular-facing. Cysteines 30 and 36 form a disulfide. 19 LRR repeats span residues 54–77 (MKSLDLSFNKITYIGHGDLRACAN), 78–101 (LQVLILKSSRINTIEGDAFYSLGS), 102–125 (LEHLDLSDNHLSSLSSSWFGPLSS), 126–150 (LKYLNLMGNPYQTLGVTSLFPNLTN), 151–175 (LQTLRIGNVETFSEIRRIDFAGLTS), 176–199 (LNELEIKALSLRNYQSQSLKSIRD), 200–223 (IHHLTLHLSESAFLLEIFADILSS), 224–250 (VRYLELRDTNLARFQFSPLPVDEVSSP), 251–278 (MKKLAFRGSVLTDESFNELLKLLRYILE), 279–308 (LSEVEFDDCTLNGLGDFNPSESDVVSELGK), 309–337 (VETVTIRRLHIPQFYLFYDLSTVYSLLEK), 338–361 (VKRITVENSKVFLVPCSFSQHLKS), 362–388 (LEFLDLSENLMVEEYLKNSACKGAWPS), 389–414 (LQTLVLSQNHLRSMQKTGEILLTLKN), 415–437 (LTSLDISRNTFHPMPDSCQWPEK), 438–457 (MRFLNLSSTGIRVVKTCIPQ), 458–478 (TLEVLDVSNNNLDSFSLFLPR), 479–500 (LQELYISRNKLKTLPDASLFPV), and 501–524 (LLVMKIRENAVSTFSKDQLGSFPK). N-linked (GlcNAc...) asparagine glycosylation is present at N147. C353 and C382 are joined by a disulfide. N-linked (GlcNAc...) asparagine glycosylation is present at N414. C432 and C454 are disulfide-bonded. N442 is a glycosylation site (N-linked (GlcNAc...) asparagine). The LRRCT domain maps to 525–576 (LETLEAGDNHFVCSCELLSFTMETPALAQILVDWPDSYLCDSPPRLHGHRLQ). The helical transmembrane segment at 588 to 608 (AALVSGVCCALLLLILLVGAL) threads the bilayer. Over 609 to 784 (CHHFHGLWYL…WVNLRTAIKS (176 aa)) the chain is Cytoplasmic. The TIR domain occupies 639–782 (VCYDAFVSYS…VFWVNLRTAI (144 aa)). A Glycyl lysine isopeptide (Lys-Gly) (interchain with G-Cter in ubiquitin) cross-link involves residue K754. The ATG16L1-binding motif motif lies at 761 to 778 (YLEWPLDEGQQEVFWVNL).

This sequence belongs to the Toll-like receptor family. As to quaternary structure, interacts with LY96, TLR1 and TLR6 (via extracellular domain). TLR2 seems to exist in heterodimers with either TLR1 or TLR6 before stimulation by the ligand. The heterodimers form bigger oligomers in response to their corresponding ligands as well as further heterotypic associations with other receptors such as CD14 and/or CD36. Binds MYD88 (via TIR domain). Interacts with TICAM1. Interacts with CNPY3. Interacts with ATG16L1. Interacts with non-modified M.tuberculosis protein MPT83. Interacts with PPP1R11. Interacts with TIRAP. In terms of assembly, (Microbial infection) Interacts with Staphylococcus aureus protein SSL3; this interaction inhibits TLR2-mediated cytokine production. (Microbial infection) Interacts with Toxoplasma gondii micronemal protein 1 (MIC1); the interaction promotes activation of bone marrow-derived dendritic cells and macrophages. Interacts with Toxoplasma gondii micronemal protein 4 (MIC4); the interaction promotes activation of bone marrow-derived dendritic cells and macrophages. Post-translationally, ubiquitinated at Lys-754 by PPP1R11, leading to its degradation. Deubiquitinated by USP2. In terms of processing, glycosylation of Asn-442 is critical for secretion of the N-terminal ectodomain of TLR2. In terms of tissue distribution, detected in a macrophage cell line, smooth muscle, lung, spleen, thymus, brain and adipose tissue. Cell surface expression detected in lung alveolar macrophages, dendritic macrophages and at lower levels in lung macrophages (at protein level).

It localises to the cell membrane. Its subcellular location is the cytoplasmic vesicle. The protein resides in the phagosome membrane. The protein localises to the membrane raft. Its function is as follows. Cooperates with LY96 to mediate the innate immune response to bacterial lipoproteins and other microbial cell wall components. Cooperates with TLR1 or TLR6 to mediate the innate immune response to bacterial lipoproteins or lipopeptides. Acts via MYD88 and TRAF6, leading to NF-kappa-B activation, cytokine secretion and the inflammatory response. May also promote apoptosis in response to lipoproteins. Forms activation clusters composed of several receptors depending on the ligand, these clusters trigger signaling from the cell surface and subsequently are targeted to the Golgi in a lipid-raft dependent pathway. Forms the cluster TLR2:TLR6:CD14:CD36 in response to diacylated lipopeptides and TLR2:TLR1:CD14 in response to triacylated lipopeptides. Recognizes M.tuberculosis major T-antigen EsxA (ESAT-6) which inhibits downstream MYD88-dependent signaling. Acts as the major receptor for M.tuberculosis lipoproteins LprA, LprG, LpqH and PhoS1 (pstS1), in conjunction with TLR1 and for some but not all lipoproteins CD14 and/or CD36. The lipoproteins act as agonists to modulate antigen presenting cell functions in response to the pathogen. Recombinant MPT83 from M.tuberculosis stimulates secretion of cytokines (TNF-alpha, IL-6 and IL-12p40) by mouse macrophage cell lines in a TLR2-dependent fashion, which leads to increased host innate immunity responses against the bacterium. Lung macrophages which express low levels of TLR2 respond poorly to stimulation by M.tuberculosis LpqH. Required for normal uptake of M.tuberculosis, a process that is inhibited by M.tuberculosis LppM. Interacts with TICAM2. (Microbial infection) Mediates activation of bone marrow-derived dendritic cells and macrophages, and production of pro-inflammatory cytokines, such as IL12 (IL12B/IL12A), triggered by Toxoplasma gondii micronemal protein 4 (MIC4) and micronemal protein 1 (MIC1). This chain is Toll-like receptor 2 (Tlr2), found in Mus musculus (Mouse).